The following is a 388-amino-acid chain: tRNA (guanine(26)-N(2))-dimethyltransferase (388 aa).

The 380-residue stretch at 4-383 (RTIVEGTTKI…APIAEIKKII (380 aa)) folds into the Trm1 methyltransferase domain. Residues R41, R78, D94, and A123 each contribute to the S-adenosyl-L-methionine site. Zn(2+) contacts are provided by C251, C254, C271, and C274.

Belongs to the class I-like SAM-binding methyltransferase superfamily. Trm1 family.

It catalyses the reaction guanosine(26) in tRNA + 2 S-adenosyl-L-methionine = N(2)-dimethylguanosine(26) in tRNA + 2 S-adenosyl-L-homocysteine + 2 H(+). Its function is as follows. Dimethylates a single guanine residue at position 26 of a number of tRNAs using S-adenosyl-L-methionine as donor of the methyl groups. The polypeptide is tRNA (guanine(26)-N(2))-dimethyltransferase (Methanosarcina acetivorans (strain ATCC 35395 / DSM 2834 / JCM 12185 / C2A)).